Here is a 113-residue protein sequence, read N- to C-terminus: Large ribosomal subunit protein uL22 (113 aa).

The protein belongs to the universal ribosomal protein uL22 family. As to quaternary structure, part of the 50S ribosomal subunit.

Functionally, this protein binds specifically to 23S rRNA; its binding is stimulated by other ribosomal proteins, e.g. L4, L17, and L20. It is important during the early stages of 50S assembly. It makes multiple contacts with different domains of the 23S rRNA in the assembled 50S subunit and ribosome. The globular domain of the protein is located near the polypeptide exit tunnel on the outside of the subunit, while an extended beta-hairpin is found that lines the wall of the exit tunnel in the center of the 70S ribosome. The protein is Large ribosomal subunit protein uL22 of Roseiflexus sp. (strain RS-1).